The chain runs to 301 residues: Probable alpha-L-glutamate ligase (301 aa).

Residues 104 to 287 (LQLLSRRGIG…VAGMIIEYLE (184 aa)) enclose the ATP-grasp domain. Residues lysine 141, 178–179 (EY), aspartate 187, and 211–213 (RSN) each bind ATP. Mg(2+) is bound by residues aspartate 248, glutamate 260, and asparagine 262. Mn(2+) contacts are provided by aspartate 248, glutamate 260, and asparagine 262.

This sequence belongs to the RimK family. Mg(2+) serves as cofactor. Requires Mn(2+) as cofactor.

In Pseudomonas savastanoi pv. phaseolicola (strain 1448A / Race 6) (Pseudomonas syringae pv. phaseolicola (strain 1448A / Race 6)), this protein is Probable alpha-L-glutamate ligase.